The following is a 1070-amino-acid chain: [F-actin]-monooxygenase MICAL1 (1070 aa).

The segment at 1 to 489 is monooxygenase domain; sequence MASTISTNPA…RDLYDMEAKE (489 aa). Residues Cys-95, 114-116, 121-123, Phe-181, Tyr-293, and Asp-393 contribute to the FAD site; these read EKR and RHN. Thr-475 carries the phosphothreonine modification. The region spanning 508-612 is the Calponin-homology (CH) domain; sequence VGSQEELLRW…YLSHFHSAFK (105 aa). A disordered region spans residues 643 to 690; that stretch reads QRTRTQENGEDAGGKKPRLEVKAETPSTEEPPVPKPDEPMTPPSQQQD. The span at 646–665 shows a compositional bias: basic and acidic residues; the sequence is RTQENGEDAGGKKPRLEVKA. Residues 671-684 are compositionally biased toward pro residues; sequence EEPPVPKPDEPMTP. Residues 695–757 enclose the LIM zinc-binding domain; it reads DLCALCGQHL…LQHLPQTGHE (63 aa). Positions 697, 700, 718, 721, 724, 727, 747, and 750 each coordinate Zn(2+). Disordered stretches follow at residues 754-838 and 865-887; these read TGHE…RSCS and MEMG…EDVP. Basic and acidic residues predominate over residues 755–766; that stretch reads GHEEDSSDRGPE. Over residues 770 to 781 the composition is skewed to polar residues; that stretch reads LPMSSENNTPSG. 3 positions are modified to phosphoserine: Ser-793, Ser-875, and Ser-876. Over residues 876–887 the composition is skewed to acidic residues; it reads SEEETEEEEDVP. The important for interaction with RAB8A stretch occupies residues 904–1070; the sequence is GTMNNYPTWR…ELASEPGVQG (167 aa). The bMERB domain maps to 921–1070; that stretch reads KEEEMKRFCK…ELASEPGVQG (150 aa). Residues 928 to 1030 adopt a coiled-coil conformation; that stretch reads FCKAQAIQRR…EETLKTAADR (103 aa). Ser-1060 bears the Phosphoserine mark.

Belongs to the Mical family. In terms of assembly, interacts with STK38 and STK38L. Associates with the SH3 domain of NEDD9. Interacts with VIM and PLXNA3. Interacts with RAB1B, RAB8A, RAB10, RAB13 and RAB15 (in their GTP-bound forms); binding to RAB1B is of low affinity compared to other Rab proteins; at least in case of RAB8A and RAB10 can bind 2 molecules of the Rab proteins simultaneously. Interacts with GRAF1/ARHGAP26, GRAF2/ARHGAP10, RAB8A, RAB8B and RAB10; may bind simultaneously to GRAFs and Rabs and connects GRAFs to Rabs. Does not interact with RAB1 and RAB11A. FAD is required as a cofactor.

Its subcellular location is the cytoplasm. It is found in the cytoskeleton. The protein localises to the endosome membrane. The protein resides in the midbody. The catalysed reaction is L-methionyl-[F-actin] + NADPH + O2 + H(+) = L-methionyl-(R)-S-oxide-[F-actin] + NADP(+) + H2O. It carries out the reaction NADPH + O2 + H(+) = H2O2 + NADP(+). Monooxygenase that promotes depolymerization of F-actin by mediating oxidation of specific methionine residues on actin to form methionine-sulfoxide, resulting in actin filament disassembly and preventing repolymerization. In the absence of actin, it also functions as a NADPH oxidase producing H(2)O(2). Acts as a cytoskeletal regulator that connects NEDD9 to intermediate filaments. Also acts as a negative regulator of apoptosis via its interaction with STK38 and STK38L; acts by antagonizing STK38 and STK38L activation by MST1/STK4. Involved in regulation of lamina-specific connectivity in the nervous system such as the development of lamina-restricted hippocampal connections. Through redox regulation of the actin cytoskeleton controls the intracellular distribution of secretory vesicles containing L1/neurofascin/NgCAM family proteins in neurons, thereby regulating their cell surface levels. May act as Rab effector protein and play a role in vesicle trafficking. Promotes endosomal tubule extension by associating with RAB8 (RAB8A or RAB8B), RAB10 and GRAF (GRAF1/ARHGAP26 or GRAF2/ARHGAP10) on the endosomal membrane which may connect GRAFs to Rabs, thereby participating in neosynthesized Rab8-Rab10-Rab11-dependent protein export. This is [F-actin]-monooxygenase MICAL1 (MICAL1) from Bos taurus (Bovine).